The chain runs to 294 residues: 33 kDa chaperonin (294 aa).

Cystine bridges form between Cys-238–Cys-240 and Cys-271–Cys-274.

It belongs to the HSP33 family. Post-translationally, under oxidizing conditions two disulfide bonds are formed involving the reactive cysteines. Under reducing conditions zinc is bound to the reactive cysteines and the protein is inactive.

It localises to the cytoplasm. Redox regulated molecular chaperone. Protects both thermally unfolding and oxidatively damaged proteins from irreversible aggregation. Plays an important role in the bacterial defense system toward oxidative stress. The polypeptide is 33 kDa chaperonin (Clostridium novyi (strain NT)).